A 556-amino-acid polypeptide reads, in one-letter code: CTP synthase (556 aa).

The tract at residues 1 to 266 (MKYIFVTGGV…GKVVEDLLGL (266 aa)) is amidoligase domain. Residue Ser-12 coordinates CTP. Ser-12 contacts UTP. Residue 13-18 (SLGKGV) participates in ATP binding. Tyr-53 provides a ligand contact to L-glutamine. An ATP-binding site is contributed by Asp-70. Residues Asp-70 and Glu-140 each contribute to the Mg(2+) site. Residues 147-149 (DIE), 187-192 (KTKPTQ), and Lys-223 contribute to the CTP site. Residues 187 to 192 (KTKPTQ) and Lys-223 each bind UTP. In terms of domain architecture, Glutamine amidotransferase type-1 spans 291-544 (TIAIAGKYTE…VKAALRGQSS (254 aa)). An L-glutamine-binding site is contributed by Gly-356. Cys-383 functions as the Nucleophile; for glutamine hydrolysis in the catalytic mechanism. L-glutamine contacts are provided by residues 384 to 387 (LGMQ), Glu-407, and Arg-467. Active-site residues include His-517 and Glu-519.

This sequence belongs to the CTP synthase family. Homotetramer.

The enzyme catalyses UTP + L-glutamine + ATP + H2O = CTP + L-glutamate + ADP + phosphate + 2 H(+). It catalyses the reaction L-glutamine + H2O = L-glutamate + NH4(+). The catalysed reaction is UTP + NH4(+) + ATP = CTP + ADP + phosphate + 2 H(+). It functions in the pathway pyrimidine metabolism; CTP biosynthesis via de novo pathway; CTP from UDP: step 2/2. Its activity is regulated as follows. Allosterically activated by GTP, when glutamine is the substrate; GTP has no effect on the reaction when ammonia is the substrate. The allosteric effector GTP functions by stabilizing the protein conformation that binds the tetrahedral intermediate(s) formed during glutamine hydrolysis. Inhibited by the product CTP, via allosteric rather than competitive inhibition. Catalyzes the ATP-dependent amination of UTP to CTP with either L-glutamine or ammonia as the source of nitrogen. Regulates intracellular CTP levels through interactions with the four ribonucleotide triphosphates. The chain is CTP synthase from Deinococcus deserti (strain DSM 17065 / CIP 109153 / LMG 22923 / VCD115).